A 291-amino-acid polypeptide reads, in one-letter code: ATP synthase gamma chain (291 aa).

This sequence belongs to the ATPase gamma chain family. In terms of assembly, F-type ATPases have 2 components, CF(1) - the catalytic core - and CF(0) - the membrane proton channel. CF(1) has five subunits: alpha(3), beta(3), gamma(1), delta(1), epsilon(1). CF(0) has three main subunits: a, b and c.

It is found in the cell inner membrane. Its function is as follows. Produces ATP from ADP in the presence of a proton gradient across the membrane. The gamma chain is believed to be important in regulating ATPase activity and the flow of protons through the CF(0) complex. This chain is ATP synthase gamma chain, found in Chlorobium limicola (strain DSM 245 / NBRC 103803 / 6330).